The chain runs to 650 residues: DNA gyrase subunit B (650 aa).

The Toprim domain maps to 429–543; it reads NELFIVEGDS…AGYVYIAQPP (115 aa). Positions 435, 508, and 510 each coordinate Mg(2+).

It belongs to the type II topoisomerase GyrB family. As to quaternary structure, heterotetramer, composed of two GyrA and two GyrB chains. In the heterotetramer, GyrA contains the active site tyrosine that forms a transient covalent intermediate with DNA, while GyrB binds cofactors and catalyzes ATP hydrolysis. It depends on Mg(2+) as a cofactor. Requires Mn(2+) as cofactor. Ca(2+) is required as a cofactor.

Its subcellular location is the cytoplasm. It carries out the reaction ATP-dependent breakage, passage and rejoining of double-stranded DNA.. A type II topoisomerase that negatively supercoils closed circular double-stranded (ds) DNA in an ATP-dependent manner to modulate DNA topology and maintain chromosomes in an underwound state. Negative supercoiling favors strand separation, and DNA replication, transcription, recombination and repair, all of which involve strand separation. Also able to catalyze the interconversion of other topological isomers of dsDNA rings, including catenanes and knotted rings. Type II topoisomerases break and join 2 DNA strands simultaneously in an ATP-dependent manner. The polypeptide is DNA gyrase subunit B (Streptococcus pyogenes serotype M1).